A 141-amino-acid polypeptide reads, in one-letter code: MSKNKTKLIITTPQGYFFNDDVEIVTLKTTEGYIGIQKDSQSLIASIKPSKLFINQINSKDLKICAISGGIAFIDKNEIKIITDAIEFKEDIDLERAKKGKEIIEQKLKKPNLSKSKIEEYNLKIEKANNRINVKNNSDTF.

Belongs to the ATPase epsilon chain family. F-type ATPases have 2 components, CF(1) - the catalytic core - and CF(0) - the membrane proton channel. CF(1) has five subunits: alpha(3), beta(3), gamma(1), delta(1), epsilon(1). CF(0) has three main subunits: a, b and c.

The protein localises to the cell membrane. Produces ATP from ADP in the presence of a proton gradient across the membrane. The sequence is that of ATP synthase epsilon chain from Mycoplasma mobile (strain ATCC 43663 / 163K / NCTC 11711) (Mesomycoplasma mobile).